Here is a 361-residue protein sequence, read N- to C-terminus: Chorismate synthase (361 aa).

2 residues coordinate NADP(+): Arg48 and Arg54. Residues 125–127 (RSS), 238–239 (NA), Gly278, 293–297 (KPTSS), and Arg319 contribute to the FMN site.

The protein belongs to the chorismate synthase family. As to quaternary structure, homotetramer. It depends on FMNH2 as a cofactor.

The enzyme catalyses 5-O-(1-carboxyvinyl)-3-phosphoshikimate = chorismate + phosphate. Its pathway is metabolic intermediate biosynthesis; chorismate biosynthesis; chorismate from D-erythrose 4-phosphate and phosphoenolpyruvate: step 7/7. In terms of biological role, catalyzes the anti-1,4-elimination of the C-3 phosphate and the C-6 proR hydrogen from 5-enolpyruvylshikimate-3-phosphate (EPSP) to yield chorismate, which is the branch point compound that serves as the starting substrate for the three terminal pathways of aromatic amino acid biosynthesis. This reaction introduces a second double bond into the aromatic ring system. This Escherichia coli O7:K1 (strain IAI39 / ExPEC) protein is Chorismate synthase.